The primary structure comprises 752 residues: Cation-transporting P-type ATPase B (752 aa).

In terms of domain architecture, HMA spans 15–78 (RRIRLDVSGM…VVEKAGYHAA (64 aa)). The a metal cation site is built by Cys26 and Cys29. Helical transmembrane passes span 105–125 (LLVAAVLFVPLADLSTLFAIV), 132–152 (GWGYILTALAAPVVTWAAWPF), 167–187 (METLISVGIVAATAWSLSSVF), 201–221 (AILNSDSIYLEVAAGVTVFVL), 361–381 (IAGVFVPVVFVIAGLAGAAWL), and 390–410 (AFSVTLGVLVIACPCALGLAT). The 4-aspartylphosphate intermediate role is filled by Asp446. A helical transmembrane segment spans residues 714-734 (AIPIAAAGLLNPLIAGAAMAF).

It belongs to the cation transport ATPase (P-type) (TC 3.A.3) family. Type IB subfamily.

Its subcellular location is the cell membrane. The enzyme catalyses ATP + H2O = ADP + phosphate + H(+). In Mycobacterium bovis (strain ATCC BAA-935 / AF2122/97), this protein is Cation-transporting P-type ATPase B (ctpB).